The chain runs to 378 residues: TelA-like protein SAUSA300_1299 (378 aa).

The protein belongs to the TelA family.

The chain is TelA-like protein SAUSA300_1299 from Staphylococcus aureus (strain USA300).